The sequence spans 256 residues: Pimeloyl-[acyl-carrier protein] methyl ester esterase (256 aa).

The AB hydrolase-1 domain occupies 15-242 (HLVLLHGWGL…AAHAPFISHP (228 aa)). Residues Trp22, 82 to 83 (SL), and 143 to 147 (FLALQ) each bind substrate. Ser82 serves as the catalytic Nucleophile. Catalysis depends on residues Asp207 and His235. Residue His235 coordinates substrate.

Belongs to the AB hydrolase superfamily. Carboxylesterase BioH family. In terms of assembly, monomer.

Its subcellular location is the cytoplasm. It carries out the reaction 6-carboxyhexanoyl-[ACP] methyl ester + H2O = 6-carboxyhexanoyl-[ACP] + methanol + H(+). Its pathway is cofactor biosynthesis; biotin biosynthesis. Its function is as follows. The physiological role of BioH is to remove the methyl group introduced by BioC when the pimeloyl moiety is complete. It allows to synthesize pimeloyl-ACP via the fatty acid synthetic pathway through the hydrolysis of the ester bonds of pimeloyl-ACP esters. This Escherichia coli O17:K52:H18 (strain UMN026 / ExPEC) protein is Pimeloyl-[acyl-carrier protein] methyl ester esterase.